The sequence spans 235 residues: Aspartate/glutamate leucyltransferase (235 aa).

It belongs to the R-transferase family. Bpt subfamily.

The protein localises to the cytoplasm. The catalysed reaction is N-terminal L-glutamyl-[protein] + L-leucyl-tRNA(Leu) = N-terminal L-leucyl-L-glutamyl-[protein] + tRNA(Leu) + H(+). It carries out the reaction N-terminal L-aspartyl-[protein] + L-leucyl-tRNA(Leu) = N-terminal L-leucyl-L-aspartyl-[protein] + tRNA(Leu) + H(+). Functions in the N-end rule pathway of protein degradation where it conjugates Leu from its aminoacyl-tRNA to the N-termini of proteins containing an N-terminal aspartate or glutamate. This is Aspartate/glutamate leucyltransferase from Pseudomonas putida (strain ATCC 700007 / DSM 6899 / JCM 31910 / BCRC 17059 / LMG 24140 / F1).